Reading from the N-terminus, the 123-residue chain is Small ribosomal subunit protein uS12 (123 aa).

Aspartate 89 is subject to 3-methylthioaspartic acid.

It belongs to the universal ribosomal protein uS12 family. Part of the 30S ribosomal subunit. Contacts proteins S8 and S17. May interact with IF1 in the 30S initiation complex.

Functionally, with S4 and S5 plays an important role in translational accuracy. In terms of biological role, interacts with and stabilizes bases of the 16S rRNA that are involved in tRNA selection in the A site and with the mRNA backbone. Located at the interface of the 30S and 50S subunits, it traverses the body of the 30S subunit contacting proteins on the other side and probably holding the rRNA structure together. The combined cluster of proteins S8, S12 and S17 appears to hold together the shoulder and platform of the 30S subunit. This Orientia tsutsugamushi (strain Ikeda) (Rickettsia tsutsugamushi) protein is Small ribosomal subunit protein uS12.